Here is a 181-residue protein sequence, read N- to C-terminus: NAD(P)H-quinone oxidoreductase subunit I, chloroplastic (181 aa).

4Fe-4S ferredoxin-type domains are found at residues 55–84 (GRIH…VDWE) and 95–124 (KNYS…MTEE). [4Fe-4S] cluster contacts are provided by cysteine 64, cysteine 67, cysteine 70, cysteine 74, cysteine 104, cysteine 107, cysteine 110, and cysteine 114.

Belongs to the complex I 23 kDa subunit family. NDH is composed of at least 16 different subunits, 5 of which are encoded in the nucleus. It depends on [4Fe-4S] cluster as a cofactor.

Its subcellular location is the plastid. The protein resides in the chloroplast thylakoid membrane. It catalyses the reaction a plastoquinone + NADH + (n+1) H(+)(in) = a plastoquinol + NAD(+) + n H(+)(out). It carries out the reaction a plastoquinone + NADPH + (n+1) H(+)(in) = a plastoquinol + NADP(+) + n H(+)(out). Its function is as follows. NDH shuttles electrons from NAD(P)H:plastoquinone, via FMN and iron-sulfur (Fe-S) centers, to quinones in the photosynthetic chain and possibly in a chloroplast respiratory chain. The immediate electron acceptor for the enzyme in this species is believed to be plastoquinone. Couples the redox reaction to proton translocation, and thus conserves the redox energy in a proton gradient. The polypeptide is NAD(P)H-quinone oxidoreductase subunit I, chloroplastic (Angiopteris evecta (Mule's foot fern)).